A 169-amino-acid chain; its full sequence is Major fimbrial subunit SMF-1 (169 aa).

The N-terminal stretch at 1–11 is a signal peptide; sequence MLAAAPLAANA.

It belongs to the fimbrial protein family.

It is found in the fimbrium. In terms of biological role, involved in adherence to eukaryotic epithelial cells and abiotic surfaces. Mediates agglutination of animal red blood cells. The chain is Major fimbrial subunit SMF-1 from Stenotrophomonas maltophilia (strain K279a).